The sequence spans 278 residues: Troponin T, slow skeletal muscle (278 aa).

Residues 1–37 are compositionally biased toward acidic residues; it reads MSDTEEQEYEEEQPEEEAAEEEEEAPEEPEPVAEPEE. 2 disordered regions span residues 1-63 and 105-153; these read MSDT…RVDF and RRRS…KKKV. Phosphoserine; by CK2 is present on S2. Residues 43–55 show a composition bias toward pro residues; that stretch reads SRPVVPPLIPPKI. Positions 105-149 are enriched in basic and acidic residues; the sequence is RRRSERAEQQRFRTEKERERQAKLAEEKMRKEEEEAKKRAEDDAK.

The protein belongs to the troponin T family. As to quaternary structure, interacts with TPM3.

Troponin T is the tropomyosin-binding subunit of troponin, the thin filament regulatory complex which confers calcium-sensitivity to striated muscle actomyosin ATPase activity. The polypeptide is Troponin T, slow skeletal muscle (TNNT1) (Homo sapiens (Human)).